Reading from the N-terminus, the 449-residue chain is SWI/SNF chromatin-remodeling accessory subunit 2 (449 aa).

Positions 1 to 11 (MHSQQRPNPQM) are enriched in polar residues. The tract at residues 1–56 (MHSQQRPNPQMNRHPYGTPGSAPQMRRPGGFAGQPPQMHGPRMVAPPAAPLPKKKK) is disordered. The SWIB/MDM2 domain occupies 223–300 (NHPAKFKLHP…PNKLHQLLQQ (78 aa)).

This sequence belongs to the SMARCD family. In terms of assembly, component of the multiprotein chromatin-remodeling complexes SWI/SNF: SWI/SNF-A (BAF), SWI/SNF-B (PBAF) and related complexes. The canonical complex contains a catalytic subunit swsn-4, core subunits swsn-1 and swsn-5, and accessory subunits swsn-3, swsn-6, phf-10, dpff-1, swsn-9 and either ham-3/swsn-2.1 or swsn-2.2.

The protein resides in the nucleus. Its subcellular location is the nucleoplasm. The protein localises to the chromosome. It is found in the nucleus envelope. Involved in transcriptional activation and repression of select genes by chromatin remodeling (alteration of DNA-nucleosome topology). Component of SWI/SNF chromatin remodeling complexes that carry out key enzymatic activities, changing chromatin structure by altering DNA-histone contacts within a nucleosome in an ATP-dependent manner. Probably regulates vulva development through the let-60/Ras pathway. Involved in nuclear reassembly after mitosis and recruitment of nuclear envelope protein, mel-28, to the nuclear periphery in the early embryo and in the adult germline. Involved in gonadogenesis. The polypeptide is SWI/SNF chromatin-remodeling accessory subunit 2 (Caenorhabditis elegans).